The sequence spans 217 residues: MGQKTHPLGFRIGITRDHKSSWFSNMKSYPKLAQEDYKIRSCIEKQLHNASISLIYIDRKVDQVQVHIHTARPGIILGKMGRGLEDLRKKLETTLKNDTQIRINLIEITDPDKEATLIAEFIVQQLEKRIAFRRVIRQAMQRSQKAKNQGIKIQVSGRLNGAEIARSEWVREGRVPLQTLRAHIDYSYKTAHTIYGILGVKVWLFKGEKIITDKVDN.

The 71-residue stretch at 39–109 (IRSCIEKQLH…QIRINLIEIT (71 aa)) folds into the KH type-2 domain.

The protein belongs to the universal ribosomal protein uS3 family. Part of the 30S ribosomal subunit.

It is found in the plastid. Its subcellular location is the chloroplast. This is Small ribosomal subunit protein uS3c (rps3) from Gracilaria tenuistipitata var. liui (Red alga).